Here is a 765-residue protein sequence, read N- to C-terminus: Palmitoyltransferase ZDHHC8 (765 aa).

Topologically, residues 1–13 (MPRSPGTRLKPAK) are cytoplasmic. The chain crosses the membrane as a helical span at residues 14–34 (YIPVATAAALLVGSSTLFFVF). Residues 35–52 (TCPWLTRAVSPAVPVYNG) lie on the Lumenal side of the membrane. A helical transmembrane segment spans residues 53–73 (IIFLFVLANFSMATFMDPGVF). At 74 to 148 (PRADEDEDKE…NCIGRRNYRY (75 aa)) the chain is on the cytoplasmic side. The region spanning 104 to 154 (KWCATCHFYRPPRCSHCSVCDNCVEDFDHHCPWVNNCIGRRNYRYFFLFLL) is the DHHC domain. Cys134 serves as the catalytic S-palmitoyl cysteine intermediate. The chain crosses the membrane as a helical span at residues 149–169 (FFLFLLSLSAHMVGVVAFGLV). Residues 170 to 190 (YVLNHAEGLGAAHTTITMAVM) lie on the Lumenal side of the membrane. A helical transmembrane segment spans residues 191-211 (CVAGLFFIPVIGLTGFHVVLV). The Cytoplasmic segment spans residues 212–765 (TRGRTTNEQV…VGGTTYEISV (554 aa)). The segment at 293–352 (GLGRSKSKGSLDRLDEKPLDLGPPLPPKIEAGTFSSDLQTPRPGSAESALSVQRTSPPTP) is disordered. A compositionally biased stretch (basic and acidic residues) spans 301–311 (GSLDRLDEKPL). Ser337 carries the phosphoserine modification. Residue Arg441 is modified to Omega-N-methylarginine. The segment at 509–540 (LHPGATGDPPRPLPRSFSPVLGPRPREPSPVR) is disordered. Phosphoserine is present on residues Ser606, Ser627, Ser675, Ser682, Ser725, and Ser743. The segment at 613-747 (GPGFGGARNP…PGPSASPTRH (135 aa)) is disordered. Low complexity predominate over residues 622–653 (PALQTSLSSLSSSVSRAPRTSSSSLQADQASS).

It belongs to the DHHC palmitoyltransferase family. ERF2/ZDHHC9 subfamily. Widely expressed.

Its subcellular location is the golgi apparatus membrane. It localises to the mitochondrion membrane. It carries out the reaction L-cysteinyl-[protein] + hexadecanoyl-CoA = S-hexadecanoyl-L-cysteinyl-[protein] + CoA. Palmitoyltransferase that catalyzes the addition of palmitate onto various protein substrates and therefore functions in several unrelated biological processes. Through the palmitoylation of ABCA1 regulates the localization of the transporter to the plasma membrane and thereby regulates its function in cholesterol and phospholipid efflux. Could also pamitoylate the D(2) dopamine receptor DRD2 and regulate its stability and localization to the plasma membrane. Could also play a role in glutamatergic transmission. In terms of biological role, (Microbial infection) Able to palmitoylate SARS coronavirus-2/SARS-CoV-2 spike protein following its synthesis in the endoplasmic reticulum (ER). In the infected cell, promotes spike biogenesis by protecting it from premature ER degradation, increases half-life and controls the lipid organization of its immediate membrane environment. Once the virus has formed, spike palmitoylation controls fusion with the target cell. The polypeptide is Palmitoyltransferase ZDHHC8 (Homo sapiens (Human)).